A 277-amino-acid polypeptide reads, in one-letter code: MGIKTYKPKTSSLRYKTTLSFDDLSKGNDPLKSLTKGKKFKSGRDSSGRISIRRRGGGHKRKYRLIDFNRRDKFSIPARVASIEYDPNRSANIALLVYKDGEKRYIISPKGIKVGDVLESGPNAPIKIGNALPLENIPIGRTVHNIELNVGKGGQLIRSAGGYAMILASDGNYVTVKLSSGEMRLIFKKCIATIGEIGNEDYANISIGKAGKSRWLGRRPKVRGVAMNPVDHPHGGGEGKTSGGRHPVSPWGQPTKGYKTRKKKRYSDKFIIKRRNK.

Disordered stretches follow at residues 32–58 (KSLT…RGGG) and 225–277 (VAMN…RRNK). The span at 258–277 (YKTRKKKRYSDKFIIKRRNK) shows a compositional bias: basic residues.

It belongs to the universal ribosomal protein uL2 family. Part of the 50S ribosomal subunit. Forms a bridge to the 30S subunit in the 70S ribosome.

One of the primary rRNA binding proteins. Required for association of the 30S and 50S subunits to form the 70S ribosome, for tRNA binding and peptide bond formation. It has been suggested to have peptidyltransferase activity; this is somewhat controversial. Makes several contacts with the 16S rRNA in the 70S ribosome. This is Large ribosomal subunit protein uL2 from Borreliella burgdorferi (strain ATCC 35210 / DSM 4680 / CIP 102532 / B31) (Borrelia burgdorferi).